The following is a 1260-amino-acid chain: MINSNDKNESDTFGIIRKILSERIMVLDGAMGTEIQKFKLKDNDYRGEEFKDFPHELGGNNDLLSLTQPHIIREIHCKYLEAGADFIETNTFNGNIFSQADYKMEHLVKRINIESARLAKSACEEYTKKDPSRPRFVCGAVGPTNKTASISPSVERPEARNVLFDELVSGYLEQVEALVEGGIDVILVETVFDSLNCKAALFAIEEFFKTYSPRLPVFVSGTIVDKSGRTLSGQTGEAFYTSVASANLMVFGLNCALGAQEMRPFLQNISKCSECYVSCYPNAGLPNTFGGYDETPEMMAEQIKEFAESGLLNIVGGCCGTSPDHIRAFCNAIEGIAPRAIPTLVPNTTLSGLEPLVFTKELNFVNVGERCNVSGSRRFANLIKANKYEEALSVARQQVEAGAQIIDINMDEGMIDAVAAIQKFLFFIGSEPEISKVPIMLDSSNFDVVEAGLKCVQGKCIVNSISLKVGEELFIKQAKIVKQYGASVVVMAFDENGQATSKEEKVRICYRSYKILTEQVGFYPQDIIFDPNILTIATGLEEHNNYGVEFIEATREIKALMPLTRVSGGVSNLSFSFRGNEPLREAMHSAFLYYAIAAGMDMGIVNAGALPIYDDIPKDLLKLVEDAILNRTNDATEKLLEYAQANNKSEKANVEVEEWRNKPVSERIAHALVKGITTYIIEDTEEARNTLPSSLSVIEGPLMGGMNVVGDLFGAGKMFLPQVIKSARVMKKAVAHLIPFMEEEKRLKRLEKGNDEAAEDEPDNAGVVVLATVKGDVHDIGKNIVGVVLGCNNYKVIDIGVMTPCEKIVEAIIANKADVVGLSGLITPSLDEMIYVASELERLKFKIPLMIGGATTSQIHTAVKISPHYSQPTVHVLDASRSVTVVQSLLDPNNKEVFAEDVSQQYAELREKHYASLKDRKYTSLEKARQHCVKVNWKTIQPVKPTFLGTQVFKEYSLEKLVTKIDWNPFFVTWQLRGKYPNRGYPRIFNDETVGAEAKKLFDDAQTMLKEIVDKKLLNARGVIGFYPANSIDEDIIIYDHNDDETRSKPIATLFGLRQQNEKETDEPYIAIGDYIAPVSSGVKDYIGLFAVSSGFGLEDMVEKYKKENDDYSSIMAKALADRLAEALAEAVHEDVRREHWAYEKDQALSNEDLFKIKYKGIRPAPGYPAQPDHTEMKTIWSLMNVNENTSIELTDHMAMLPGAAVCGVYFSHEHAKYFSVGKITKEQIESYASRKQITKEEAERWLSSILSYDRLPLVK.

The region spanning 13–333 is the Hcy-binding domain; that stretch reads FGIIRKILSE…DHIRAFCNAI (321 aa). Residues Cys255, Cys318, and Cys319 each coordinate Zn(2+). The Pterin-binding domain maps to 364-625; sequence FVNVGERCNV…IPKDLLKLVE (262 aa). The region spanning 655-749 is the B12-binding N-terminal domain; the sequence is EVEEWRNKPV…FMEEEKRLKR (95 aa). Methylcob(III)alamin contacts are provided by residues Glu699, 775–779, His778, Ser823, Thr827, and Ala879; that span reads GDVHD. Residues 766 to 883 form the B12-binding domain; that stretch reads GVVVLATVKG…VHVLDASRSV (118 aa). In terms of domain architecture, AdoMet activation spans 916-1256; the sequence is SLKDRKYTSL…LSSILSYDRL (341 aa). Residues Asp966, Arg1163, and 1218-1219 each bind S-adenosyl-L-methionine; that span reads YF.

The protein belongs to the vitamin-B12 dependent methionine synthase family. Requires methylcob(III)alamin as cofactor. Zn(2+) is required as a cofactor.

It carries out the reaction (6S)-5-methyl-5,6,7,8-tetrahydrofolate + L-homocysteine = (6S)-5,6,7,8-tetrahydrofolate + L-methionine. Its pathway is amino-acid biosynthesis; L-methionine biosynthesis via de novo pathway; L-methionine from L-homocysteine (MetH route): step 1/1. In terms of biological role, catalyzes the transfer of a methyl group from methyl-cobalamin to homocysteine, yielding enzyme-bound cob(I)alamin and methionine. Subsequently, remethylates the cofactor using methyltetrahydrofolate. In Dictyostelium discoideum (Social amoeba), this protein is Methionine synthase (mtr).